A 635-amino-acid polypeptide reads, in one-letter code: Threonine--tRNA ligase (635 aa).

Positions 1-61 (MIKITLKDGK…HKDSSLEILT (61 aa)) constitute a TGS domain. The catalytic stretch occupies residues 242 to 532 (DHRKLGKELD…LIEQYAGAFP (291 aa)). 3 residues coordinate Zn(2+): Cys333, His384, and His509.

Belongs to the class-II aminoacyl-tRNA synthetase family. Homodimer. The cofactor is Zn(2+).

The protein localises to the cytoplasm. It carries out the reaction tRNA(Thr) + L-threonine + ATP = L-threonyl-tRNA(Thr) + AMP + diphosphate + H(+). Catalyzes the attachment of threonine to tRNA(Thr) in a two-step reaction: L-threonine is first activated by ATP to form Thr-AMP and then transferred to the acceptor end of tRNA(Thr). Also edits incorrectly charged L-seryl-tRNA(Thr). The chain is Threonine--tRNA ligase from Clostridium botulinum (strain Kyoto / Type A2).